A 708-amino-acid polypeptide reads, in one-letter code: ATP-dependent DNA helicase Hel308 (708 aa).

ATP contacts are provided by residues Gln28 and 46 to 53 (TATASGKS). In terms of domain architecture, Helicase ATP-binding spans 33–198 (RAGIFDGRSV…WLGARLVESS (166 aa)). A DEAH box motif is present at residues 143-146 (DEIH). A Helicase C-terminal domain is found at 231–429 (EVALAVDAVA…EPNLRAHVLG (199 aa)).

The protein belongs to the helicase family. Hel308 subfamily. As to quaternary structure, monomer.

The enzyme catalyses Couples ATP hydrolysis with the unwinding of duplex DNA by translocating in the 3'-5' direction.. It catalyses the reaction ATP + H2O = ADP + phosphate + H(+). In terms of biological role, DNA-dependent ATPase and 3'-5' DNA helicase that may be involved in repair of stalled replication forks. This chain is ATP-dependent DNA helicase Hel308, found in Pyrobaculum calidifontis (strain DSM 21063 / JCM 11548 / VA1).